The sequence spans 1011 residues: Protein argonaute 1C (1011 aa).

Residues 1–11 (MASRRPTHRHH) are compositionally biased toward basic residues. Disordered regions lie at residues 1-95 (MASR…SPLA) and 107-147 (RPSE…PLRP). 2 stretches are compositionally biased toward low complexity: residues 28–53 (ARYAQPQPQPQQQQQQQGRGCRARGA) and 61–92 (QQQQQQPRSTPTRATTVTVASSSSTTATASSS). Positions 127–140 (ATTTPHHIPSSSKS) are enriched in polar residues. A PAZ domain is found at 352–462 (PVIDFVAQLL…LPMEVCKIVE (111 aa)). The Piwi domain occupies 638–959 (LLIGILPDNN…AAFRARFYME (322 aa)). Positions 963-982 (SDSSSVVSGPGVRGPLSGSS) are enriched in low complexity. A disordered region spans residues 963-994 (SDSSSVVSGPGVRGPLSGSSTSRTRAPGGAAV).

It belongs to the argonaute family. Ago subfamily.

Functionally, probably involved in the RNA silencing pathway. May bind to short RNAs such as microRNAs (miRNAs) or short interfering RNAs (siRNAs), and represses the translation of mRNAs which are complementary to them. This chain is Protein argonaute 1C (AGO1C), found in Oryza sativa subsp. japonica (Rice).